The primary structure comprises 356 residues: Phosphoribosyl pyrophosphate synthase-associated protein 1 (356 aa).

An N-acetylmethionine modification is found at methionine 1. A phosphoserine mark is found at serine 177 and serine 215.

Belongs to the ribose-phosphate pyrophosphokinase family. As to quaternary structure, binds to PRPS1 and PRPS2.

Its function is as follows. Seems to play a negative regulatory role in 5-phosphoribose 1-diphosphate synthesis. The protein is Phosphoribosyl pyrophosphate synthase-associated protein 1 (Prpsap1) of Mus musculus (Mouse).